The sequence spans 112 residues: UstYa family oxidase VicYb (112 aa).

Short sequence motifs (HXXHC) lie at residues 9–13 and 36–40; these read HYLHC and HLDHC.

The protein belongs to the ustYa family.

It functions in the pathway mycotoxin biosynthesis. UstYa family oxidase, part of the gene cluster that mediates the biosynthesis of the secondary metabolite victorin, the molecular basis for Victoria blight of oats. Within the pathway, vicYb catalyzes the oxidative cyclization of the core peptide. The pathway starts with the processing of the precursor vicA1 by several endopeptidases including kexin proteases as well as the cluster-specific S28 family peptidases vicPa and vicPb to produce 7 identical copies of the hexapeptide Gly-Leu-Lys-Leu-Ala-Phe. After being excised from the precursor peptide, the core peptides are cyclized and modified post-translationally by enzymes encoded within the gene cluster. The ustYa family oxidase vicYb is required for the formation of the macrocycle in victorin and the copper amine oxidases (CAOs) vicK1 and vicK2 are responsible for converting victorin to the active form by oxidizing the N-terminal glycyl residue in the peptides to glyoxylate. Relaxed substrate specificity of enzymes in the victorin biosynthetic pathway results in a metabolic grid that produces a set of analogs including victorinines B, C, E or HV-toxin M. This chain is UstYa family oxidase VicYb, found in Bipolaris victoriae (strain FI3) (Victoria blight of oats agent).